The chain runs to 292 residues: Mitochondrial fission regulator 1-like (292 aa).

Thr30 bears the Phosphothreonine mark. Ser41 carries the post-translational modification Phosphoserine. Position 103 is a phosphoserine; by AMPK (Ser103). Phosphoserine occurs at positions 110, 224, and 225. Position 238 is a phosphoserine; by AMPK (Ser238). Ser261 and Ser273 each carry phosphoserine.

Belongs to the MTFR1 family. In terms of processing, phosphorylated by AMPK. Upon stress, phosphorylation at Ser-103 and Ser-238 by AMPK is sufficient to induce mitochondrial fragmentation.

The protein resides in the mitochondrion outer membrane. Its function is as follows. Mitochondrial protein required for adaptation of miochondrial dynamics to metabolic changes. Regulates mitochondrial morphology at steady state and mediates AMPK-dependent stress-induced mitochondrial fragmentation via the control of OPA1 levels. In Homo sapiens (Human), this protein is Mitochondrial fission regulator 1-like.